Here is a 388-residue protein sequence, read N- to C-terminus: Dual specificity mitogen-activated protein kinase kinase 1 (388 aa).

The disordered stretch occupies residues 1 to 20; sequence PIQLNPAPDGSAVNGTSSAE. One can recognise a Protein kinase domain in the interval 61 to 356; it reads FEKISELGAG…LKQLMIHAFI (296 aa). Residues 67-75 and K90 contribute to the ATP site; that span reads LGAGNGGVV. D183 serves as the catalytic Proton acceptor. 2 positions are modified to phosphoserine; by RAF: S211 and S215. The interval 275–299 is disordered; the sequence is DSPVTETSPRQRAPGRPMSSYGSDS.

Belongs to the protein kinase superfamily. STE Ser/Thr protein kinase family. MAP kinase kinase subfamily. MAPKK is itself dependent on Ser/Thr phosphorylation for activity catalyzed by MAP kinase kinase kinases (RAF or MEKK1).

The protein resides in the cytoplasm. The protein localises to the cytoskeleton. It localises to the microtubule organizing center. Its subcellular location is the centrosome. It is found in the spindle pole body. The protein resides in the nucleus. It catalyses the reaction L-seryl-[protein] + ATP = O-phospho-L-seryl-[protein] + ADP + H(+). The enzyme catalyses L-threonyl-[protein] + ATP = O-phospho-L-threonyl-[protein] + ADP + H(+). It carries out the reaction L-tyrosyl-[protein] + ATP = O-phospho-L-tyrosyl-[protein] + ADP + H(+). In terms of biological role, dual specificity protein kinase which acts as an essential component of the MAP kinase signal transduction pathway. Binding of extracellular ligands such as growth factors, cytokines and hormones to their cell-surface receptors activates RAS and this initiates RAF1 activation. RAF1 then further activates the dual-specificity protein kinases MAP2K1/MEK1 and MAP2K2/MEK2. Both MAP2K1/MEK1 and MAP2K2/MEK2 function specifically in the MAPK/ERK cascade, and catalyze the concomitant phosphorylation of a threonine and a tyrosine residue in a Thr-Glu-Tyr sequence located in the extracellular signal-regulated kinases MAPK3/ERK1 and MAPK1/ERK2, leading to their activation and further transduction of the signal within the MAPK/ERK cascade. Depending on the cellular context, this pathway mediates diverse biological functions such as cell growth, adhesion, survival and differentiation predominantly through the regulation of transcription, metabolism and cytoskeletal rearrangements. The sequence is that of Dual specificity mitogen-activated protein kinase kinase 1 (MAP2K1) from Serinus canaria (Island canary).